Reading from the N-terminus, the 490-residue chain is Ketol-acid reductoisomerase (NADP(+)) (490 aa).

The KARI N-terminal Rossmann domain maps to 18–208 (AKCRFMDSSE…GGHKAGVLMS (191 aa)). NADP(+) is bound by residues 45 to 48 (CGAQ), Arg68, Arg76, Ser78, and 108 to 110 (DKQ). His132 is a catalytic residue. An NADP(+)-binding site is contributed by Gly158. 2 consecutive KARI C-terminal knotted domains span residues 209–344 (SFIA…KTPA) and 345–486 (GDVE…MADM). The Mg(2+) site is built by Asp217, Glu221, Glu389, and Glu393. Substrate is bound at residue Ser414.

It belongs to the ketol-acid reductoisomerase family. Requires Mg(2+) as cofactor.

It carries out the reaction (2R)-2,3-dihydroxy-3-methylbutanoate + NADP(+) = (2S)-2-acetolactate + NADPH + H(+). The catalysed reaction is (2R,3R)-2,3-dihydroxy-3-methylpentanoate + NADP(+) = (S)-2-ethyl-2-hydroxy-3-oxobutanoate + NADPH + H(+). It functions in the pathway amino-acid biosynthesis; L-isoleucine biosynthesis; L-isoleucine from 2-oxobutanoate: step 2/4. The protein operates within amino-acid biosynthesis; L-valine biosynthesis; L-valine from pyruvate: step 2/4. Involved in the biosynthesis of branched-chain amino acids (BCAA). Catalyzes an alkyl-migration followed by a ketol-acid reduction of (S)-2-acetolactate (S2AL) to yield (R)-2,3-dihydroxy-isovalerate. In the isomerase reaction, S2AL is rearranged via a Mg-dependent methyl migration to produce 3-hydroxy-3-methyl-2-ketobutyrate (HMKB). In the reductase reaction, this 2-ketoacid undergoes a metal-dependent reduction by NADPH to yield (R)-2,3-dihydroxy-isovalerate. In Marinomonas sp. (strain MWYL1), this protein is Ketol-acid reductoisomerase (NADP(+)).